Consider the following 357-residue polypeptide: UDP-N-acetylglucosamine--N-acetylmuramyl-(pentapeptide) pyrophosphoryl-undecaprenol N-acetylglucosamine transferase (357 aa).

Residues 15 to 17 (TGG), Asn-124, Arg-165, Ser-194, and Gln-288 contribute to the UDP-N-acetyl-alpha-D-glucosamine site.

Belongs to the glycosyltransferase 28 family. MurG subfamily.

The protein localises to the cell inner membrane. The enzyme catalyses di-trans,octa-cis-undecaprenyl diphospho-N-acetyl-alpha-D-muramoyl-L-alanyl-D-glutamyl-meso-2,6-diaminopimeloyl-D-alanyl-D-alanine + UDP-N-acetyl-alpha-D-glucosamine = di-trans,octa-cis-undecaprenyl diphospho-[N-acetyl-alpha-D-glucosaminyl-(1-&gt;4)]-N-acetyl-alpha-D-muramoyl-L-alanyl-D-glutamyl-meso-2,6-diaminopimeloyl-D-alanyl-D-alanine + UDP + H(+). The protein operates within cell wall biogenesis; peptidoglycan biosynthesis. Cell wall formation. Catalyzes the transfer of a GlcNAc subunit on undecaprenyl-pyrophosphoryl-MurNAc-pentapeptide (lipid intermediate I) to form undecaprenyl-pyrophosphoryl-MurNAc-(pentapeptide)GlcNAc (lipid intermediate II). This is UDP-N-acetylglucosamine--N-acetylmuramyl-(pentapeptide) pyrophosphoryl-undecaprenol N-acetylglucosamine transferase from Trichormus variabilis (strain ATCC 29413 / PCC 7937) (Anabaena variabilis).